The following is a 282-amino-acid chain: Acetylglutamate kinase (282 aa).

Substrate is bound by residues 62–63 (GG), arginine 84, and asparagine 178.

This sequence belongs to the acetylglutamate kinase family. ArgB subfamily.

The protein resides in the cytoplasm. The enzyme catalyses N-acetyl-L-glutamate + ATP = N-acetyl-L-glutamyl 5-phosphate + ADP. It functions in the pathway amino-acid biosynthesis; L-arginine biosynthesis; N(2)-acetyl-L-ornithine from L-glutamate: step 2/4. In terms of biological role, catalyzes the ATP-dependent phosphorylation of N-acetyl-L-glutamate. This Thermotoga sp. (strain RQ2) protein is Acetylglutamate kinase.